A 154-amino-acid polypeptide reads, in one-letter code: UPF0178 protein GM21_2006 (154 aa).

Belongs to the UPF0178 family.

This Geobacter sp. (strain M21) protein is UPF0178 protein GM21_2006.